Here is a 112-residue protein sequence, read N- to C-terminus: Putative transmembrane protein ORF112 (112 aa).

The next 3 helical transmembrane spans lie at 26–46 (FWEV…GILV), 50–70 (ILVT…MYLF), and 80–100 (IFFP…LVGV).

It localises to the host membrane. The chain is Putative transmembrane protein ORF112 from Acidianus convivator (ABV).